The primary structure comprises 320 residues: o-succinylbenzoate synthase (320 aa).

K133 serves as the catalytic Proton donor. Positions 161, 190, and 213 each coordinate Mg(2+). The Proton acceptor role is filled by K235.

Belongs to the mandelate racemase/muconate lactonizing enzyme family. MenC type 1 subfamily. A divalent metal cation serves as cofactor.

It carries out the reaction (1R,6R)-6-hydroxy-2-succinyl-cyclohexa-2,4-diene-1-carboxylate = 2-succinylbenzoate + H2O. The protein operates within quinol/quinone metabolism; 1,4-dihydroxy-2-naphthoate biosynthesis; 1,4-dihydroxy-2-naphthoate from chorismate: step 4/7. Its pathway is quinol/quinone metabolism; menaquinone biosynthesis. Its function is as follows. Converts 2-succinyl-6-hydroxy-2,4-cyclohexadiene-1-carboxylate (SHCHC) to 2-succinylbenzoate (OSB). This chain is o-succinylbenzoate synthase, found in Escherichia coli O157:H7.